An 837-amino-acid polypeptide reads, in one-letter code: Translation initiation factor IF-2 (837 aa).

Residues 94–253 (KRSPDEIEAE…QHGFQNPTGP (160 aa)) are disordered. Residues 95–148 (RSPDEIEAERQRELEEQRAAEEAERLKAEEAAARQRAEEEARKAEEAARAKAAE) are compositionally biased toward basic and acidic residues. Residues 149–171 (EAVSAQPAAAVEVAAAEPVAKPA) show a composition bias toward low complexity. Basic and acidic residues-rich tracts occupy residues 172-188 (AAEE…PKRD) and 220-229 (STDEESDGYR). A compositionally biased stretch (basic residues) spans 230–244 (RGGRGGKSKLKKRNQ). Positions 337–506 (TRAPVVTVMG…LLQAEVLELK (170 aa)) constitute a tr-type G domain. Residues 346–353 (GHVDHGKT) are G1. 346 to 353 (GHVDHGKT) is a binding site for GTP. The G2 stretch occupies residues 371–375 (GITQH). A G3 region spans residues 392 to 395 (DTPG). GTP-binding positions include 392-396 (DTPGH) and 446-449 (NKID). A G4 region spans residues 446 to 449 (NKID). The G5 stretch occupies residues 482 to 484 (SAK).

It belongs to the TRAFAC class translation factor GTPase superfamily. Classic translation factor GTPase family. IF-2 subfamily.

Its subcellular location is the cytoplasm. Its function is as follows. One of the essential components for the initiation of protein synthesis. Protects formylmethionyl-tRNA from spontaneous hydrolysis and promotes its binding to the 30S ribosomal subunits. Also involved in the hydrolysis of GTP during the formation of the 70S ribosomal complex. This Pseudomonas paraeruginosa (strain DSM 24068 / PA7) (Pseudomonas aeruginosa (strain PA7)) protein is Translation initiation factor IF-2.